A 416-amino-acid polypeptide reads, in one-letter code: Squalene synthase (416 aa).

2 helical membrane-spanning segments follow: residues 285–304 (VINFCAIPQVMAIGTLNACY) and 386–406 (FISYDWMAVTSLAVSSAFLIA).

The protein belongs to the phytoene/squalene synthase family. It depends on Mg(2+) as a cofactor.

It is found in the endoplasmic reticulum membrane. It carries out the reaction 2 (2E,6E)-farnesyl diphosphate + NADPH + H(+) = squalene + 2 diphosphate + NADP(+). It catalyses the reaction 2 (2E,6E)-farnesyl diphosphate + NADH + H(+) = squalene + 2 diphosphate + NAD(+). Its pathway is terpene metabolism; lanosterol biosynthesis; lanosterol from farnesyl diphosphate: step 1/3. The chain is Squalene synthase (fdfT) from Dictyostelium discoideum (Social amoeba).